Here is a 521-residue protein sequence, read N- to C-terminus: Bifunctional purine biosynthesis protein PurH (521 aa).

Residues M1 to V145 enclose the MGS-like domain.

It belongs to the PurH family.

The enzyme catalyses (6R)-10-formyltetrahydrofolate + 5-amino-1-(5-phospho-beta-D-ribosyl)imidazole-4-carboxamide = 5-formamido-1-(5-phospho-D-ribosyl)imidazole-4-carboxamide + (6S)-5,6,7,8-tetrahydrofolate. It carries out the reaction IMP + H2O = 5-formamido-1-(5-phospho-D-ribosyl)imidazole-4-carboxamide. Its pathway is purine metabolism; IMP biosynthesis via de novo pathway; 5-formamido-1-(5-phospho-D-ribosyl)imidazole-4-carboxamide from 5-amino-1-(5-phospho-D-ribosyl)imidazole-4-carboxamide (10-formyl THF route): step 1/1. The protein operates within purine metabolism; IMP biosynthesis via de novo pathway; IMP from 5-formamido-1-(5-phospho-D-ribosyl)imidazole-4-carboxamide: step 1/1. The sequence is that of Bifunctional purine biosynthesis protein PurH from Burkholderia multivorans (strain ATCC 17616 / 249).